The primary structure comprises 943 residues: Isoleucine--tRNA ligase (943 aa).

Residues 58–68 carry the 'HIGH' region motif; the sequence is PYANGKIHIGH. Position 567 (Glu567) interacts with L-isoleucyl-5'-AMP. A 'KMSKS' region motif is present at residues 608 to 612; sequence KMSKS. Lys611 contacts ATP. Positions 906, 909, 926, and 929 each coordinate Zn(2+).

Belongs to the class-I aminoacyl-tRNA synthetase family. IleS type 1 subfamily. Monomer. It depends on Zn(2+) as a cofactor.

The protein resides in the cytoplasm. It catalyses the reaction tRNA(Ile) + L-isoleucine + ATP = L-isoleucyl-tRNA(Ile) + AMP + diphosphate. Its function is as follows. Catalyzes the attachment of isoleucine to tRNA(Ile). As IleRS can inadvertently accommodate and process structurally similar amino acids such as valine, to avoid such errors it has two additional distinct tRNA(Ile)-dependent editing activities. One activity is designated as 'pretransfer' editing and involves the hydrolysis of activated Val-AMP. The other activity is designated 'posttransfer' editing and involves deacylation of mischarged Val-tRNA(Ile). The polypeptide is Isoleucine--tRNA ligase (Pseudomonas putida (strain GB-1)).